Consider the following 504-residue polypeptide: Ribose import ATP-binding protein RbsA (504 aa).

ABC transporter domains lie at 6–242 (LELK…VGRR) and 252–495 (VRHG…VGKT). 38–45 (GENGAGKS) contributes to the ATP binding site.

This sequence belongs to the ABC transporter superfamily. Ribose importer (TC 3.A.1.2.1) family. The complex is composed of an ATP-binding protein (RbsA), two transmembrane proteins (RbsC) and a solute-binding protein (RbsB).

Its subcellular location is the cell inner membrane. It carries out the reaction D-ribose(out) + ATP + H2O = D-ribose(in) + ADP + phosphate + H(+). Its function is as follows. Part of the ABC transporter complex RbsABC involved in ribose import. Responsible for energy coupling to the transport system. This Photobacterium profundum (strain SS9) protein is Ribose import ATP-binding protein RbsA.